The chain runs to 196 residues: Large ribosomal subunit protein uL14my (196 aa).

Residues 1–62 constitute a mitochondrion transit peptide; sequence MATALASKLS…TILKCVDNSC (62 aa). The disordered stretch occupies residues 148–175; sequence EKKGQNNSHGSKRKMEYNQPTGTRVFGP.

This sequence belongs to the universal ribosomal protein uL14 family. In terms of assembly, part of the mitochondrial 50S ribosomal subunit. Mostly expressed in pistils and inflorescences, including floral organs and meristems, and, to a lower extent, in leaves.

It localises to the mitochondrion. Its function is as follows. Binds to 23S rRNA in mitochondrion. Required for the formation of the proximal region of the ovule primordium during floral organogenesis, thus participating in patterning and growth of ovule. Also regulates the initiation and/or maintenance of integument and embryo sac ontogenesis. Prevents inappropriate cell death in the young ovule. This Arabidopsis thaliana (Mouse-ear cress) protein is Large ribosomal subunit protein uL14my (HLL).